The chain runs to 331 residues: MAQLFYDSDADLGLLNGKTVAIIGYGSQGHAHALNLKDSGVNVVVGLYDGSRSAEKAKADGLEVLSVADASAKADWIMVLLPDEFQKDVYEKEIAPHLNAGKVLSFAHGFNIRFELIKPPADVDVVMIAPKGPGHTVRWEYQNGQGVPALFAIEQDASGNARGMAMAYAKGIGGTRAGILETNFKEETETDLFGEQAVLCGGLSELVKAGFETLVEAGYQPELAYFECLHEVKLIVDLMVKGGLTSMRDSISNTAEYGDYVSGPRLITADTKAEMKRVLADIQDGTFARNFVAECEAGKPEMKKVRDRDSQHPIEKVGKGLRSMFSWLKDA.

Positions 2–182 (AQLFYDSDAD…GGTRAGILET (181 aa)) constitute a KARI N-terminal Rossmann domain. NADP(+) contacts are provided by residues 25–28 (YGSQ), S51, S53, and 83–86 (DEFQ). H108 is a catalytic residue. G134 is a binding site for NADP(+). One can recognise a KARI C-terminal knotted domain in the interval 183-328 (NFKEETETDL…KGLRSMFSWL (146 aa)). Positions 191, 195, 227, and 231 each coordinate Mg(2+). S252 provides a ligand contact to substrate.

This sequence belongs to the ketol-acid reductoisomerase family. Mg(2+) serves as cofactor.

It catalyses the reaction (2R)-2,3-dihydroxy-3-methylbutanoate + NADP(+) = (2S)-2-acetolactate + NADPH + H(+). The enzyme catalyses (2R,3R)-2,3-dihydroxy-3-methylpentanoate + NADP(+) = (S)-2-ethyl-2-hydroxy-3-oxobutanoate + NADPH + H(+). It functions in the pathway amino-acid biosynthesis; L-isoleucine biosynthesis; L-isoleucine from 2-oxobutanoate: step 2/4. It participates in amino-acid biosynthesis; L-valine biosynthesis; L-valine from pyruvate: step 2/4. Functionally, involved in the biosynthesis of branched-chain amino acids (BCAA). Catalyzes an alkyl-migration followed by a ketol-acid reduction of (S)-2-acetolactate (S2AL) to yield (R)-2,3-dihydroxy-isovalerate. In the isomerase reaction, S2AL is rearranged via a Mg-dependent methyl migration to produce 3-hydroxy-3-methyl-2-ketobutyrate (HMKB). In the reductase reaction, this 2-ketoacid undergoes a metal-dependent reduction by NADPH to yield (R)-2,3-dihydroxy-isovalerate. The chain is Ketol-acid reductoisomerase (NADP(+)) from Synechococcus sp. (strain CC9605).